A 335-amino-acid polypeptide reads, in one-letter code: Glyceraldehyde-3-phosphate dehydrogenase 1 (335 aa).

Residues 13–14 (TI) and glycine 111 contribute to the NAD(+) site. 140–142 (SCN) contacts D-glyceraldehyde 3-phosphate. The active-site Nucleophile is the cysteine 141. An NAD(+)-binding site is contributed by arginine 169. D-glyceraldehyde 3-phosphate-binding positions include threonine 171 and 195–196 (HG). Glutamine 300 provides a ligand contact to NAD(+).

This sequence belongs to the glyceraldehyde-3-phosphate dehydrogenase family. Homotetramer.

The protein localises to the cytoplasm. It carries out the reaction D-glyceraldehyde 3-phosphate + phosphate + NADP(+) = (2R)-3-phospho-glyceroyl phosphate + NADPH + H(+). The enzyme catalyses D-glyceraldehyde 3-phosphate + phosphate + NAD(+) = (2R)-3-phospho-glyceroyl phosphate + NADH + H(+). It functions in the pathway carbohydrate degradation; glycolysis; pyruvate from D-glyceraldehyde 3-phosphate: step 1/5. In Methanosarcina acetivorans (strain ATCC 35395 / DSM 2834 / JCM 12185 / C2A), this protein is Glyceraldehyde-3-phosphate dehydrogenase 1 (gapA).